The primary structure comprises 168 residues: G/U mismatch-specific DNA glycosylase (168 aa).

This sequence belongs to the uracil-DNA glycosylase (UDG) superfamily. TDG/mug family. In terms of assembly, binds DNA as a monomer.

It localises to the cytoplasm. It carries out the reaction Specifically hydrolyzes mismatched double-stranded DNA and polynucleotides, releasing free uracil.. Its function is as follows. Excises ethenocytosine and uracil, which can arise by alkylation or deamination of cytosine, respectively, from the corresponding mispairs with guanine in ds-DNA. It is capable of hydrolyzing the carbon-nitrogen bond between the sugar-phosphate backbone of the DNA and the mispaired base. The complementary strand guanine functions in substrate recognition. Required for DNA damage lesion repair in stationary-phase cells. The chain is G/U mismatch-specific DNA glycosylase from Salmonella dublin (strain CT_02021853).